A 202-amino-acid polypeptide reads, in one-letter code: MKTLLFIYLQLLLLLSIIIGRVVKVEYLHLVVEVEPSTITESCLSDGIDGYSGSFYLNTTFAELMLKEHNNKRKLHQSCPLKWSSELFNYASQFAAEYSCSGILQHSGGKYGENLAFGYSPIGAIEAWYDEGEMYVYGSENVYNHFTAIVWNNTNSLGCAYKSCDTTTNLNALYIVCSYYPPGNVIGYSSQNVFPLNSKMVN.

Positions M1–G20 are cleaved as a signal peptide. N-linked (GlcNAc...) asparagine glycans are attached at residues N58 and N152. Residues L66–Y179 form the SCP domain.

This sequence belongs to the CRISP family.

It is found in the secreted. Secreted protein that acts as a virulence factor during infections. The chain is Probable pathogenesis-related protein CaO19.2336 from Candida albicans (strain SC5314 / ATCC MYA-2876) (Yeast).